The chain runs to 269 residues: Phosphatidylglycerol--prolipoprotein diacylglyceryl transferase (269 aa).

3 helical membrane passes run 21–41, 54–74, and 88–108; these read WYGI…VLEG, LLLY…VVFE, and IWDG…VILI. A 1,2-diacyl-sn-glycero-3-phospho-(1'-sn-glycerol) is bound at residue Arg-136. A run of 2 helical transmembrane segments spans residues 206–226 and 236–256; these read GEVV…IEGM and LRVS…AIFY.

It belongs to the Lgt family.

The protein localises to the cell membrane. It catalyses the reaction L-cysteinyl-[prolipoprotein] + a 1,2-diacyl-sn-glycero-3-phospho-(1'-sn-glycerol) = an S-1,2-diacyl-sn-glyceryl-L-cysteinyl-[prolipoprotein] + sn-glycerol 1-phosphate + H(+). It participates in protein modification; lipoprotein biosynthesis (diacylglyceryl transfer). Catalyzes the transfer of the diacylglyceryl group from phosphatidylglycerol to the sulfhydryl group of the N-terminal cysteine of a prolipoprotein, the first step in the formation of mature lipoproteins. The chain is Phosphatidylglycerol--prolipoprotein diacylglyceryl transferase from Ligilactobacillus salivarius (strain UCC118) (Lactobacillus salivarius).